A 365-amino-acid chain; its full sequence is Serpentine receptor class epsilon-38 (365 aa).

Helical transmembrane passes span 26-46 (GMYLYLLLTEILLYVGTGVII), 65-85 (IMTALFLCQWFEAIAAKLLII), 124-144 (ALVISGFLIWHYAYTMIFGIL), 168-188 (IPVFLITSTHLITLTFSYFVL), 196-216 (LGTSPCFLNSALVVMTFLAVW), 256-276 (LVIVVLCAISVPCALLICLVI), and 285-305 (IFIHIMENFIYLNPVIICSTL).

This sequence belongs to the nematode receptor-like protein sre family.

It localises to the membrane. The sequence is that of Serpentine receptor class epsilon-38 (sre-38) from Caenorhabditis elegans.